Here is a 204-residue protein sequence, read N- to C-terminus: MLSLQFITHQTENYSYLESARMALEGGCKWIQLRMKEASPEEVEAVALQLKPLCKAKEAILILDDHVELAKKLEVDGVHLGKKDMPIGEARQMLGEAFIIGGTANTFEDVKLHHAAGADYLGIGPFRFTTTKKNLSPVLGLEGYTSILAQMNEAGIRIPVVAIGGIVAEDIPAIMETGVNGIALSGAILQAPDPVEETKRILNI.

4-amino-2-methyl-5-(diphosphooxymethyl)pyrimidine contacts are provided by residues Q32–K36 and D64. Mg(2+) is bound by residues D65 and D84. T103 is a 4-amino-2-methyl-5-(diphosphooxymethyl)pyrimidine binding site. T129 to T131 serves as a coordination point for 2-[(2R,5Z)-2-carboxy-4-methylthiazol-5(2H)-ylidene]ethyl phosphate. Residue K132 coordinates 4-amino-2-methyl-5-(diphosphooxymethyl)pyrimidine. G165 is a 2-[(2R,5Z)-2-carboxy-4-methylthiazol-5(2H)-ylidene]ethyl phosphate binding site.

This sequence belongs to the thiamine-phosphate synthase family. The cofactor is Mg(2+).

It carries out the reaction 2-[(2R,5Z)-2-carboxy-4-methylthiazol-5(2H)-ylidene]ethyl phosphate + 4-amino-2-methyl-5-(diphosphooxymethyl)pyrimidine + 2 H(+) = thiamine phosphate + CO2 + diphosphate. It catalyses the reaction 2-(2-carboxy-4-methylthiazol-5-yl)ethyl phosphate + 4-amino-2-methyl-5-(diphosphooxymethyl)pyrimidine + 2 H(+) = thiamine phosphate + CO2 + diphosphate. The catalysed reaction is 4-methyl-5-(2-phosphooxyethyl)-thiazole + 4-amino-2-methyl-5-(diphosphooxymethyl)pyrimidine + H(+) = thiamine phosphate + diphosphate. The protein operates within cofactor biosynthesis; thiamine diphosphate biosynthesis; thiamine phosphate from 4-amino-2-methyl-5-diphosphomethylpyrimidine and 4-methyl-5-(2-phosphoethyl)-thiazole: step 1/1. Condenses 4-methyl-5-(beta-hydroxyethyl)thiazole monophosphate (THZ-P) and 2-methyl-4-amino-5-hydroxymethyl pyrimidine pyrophosphate (HMP-PP) to form thiamine monophosphate (TMP). The sequence is that of Thiamine-phosphate synthase from Bacteroides fragilis (strain ATCC 25285 / DSM 2151 / CCUG 4856 / JCM 11019 / LMG 10263 / NCTC 9343 / Onslow / VPI 2553 / EN-2).